The sequence spans 511 residues: Synaptotagmin-6 (511 aa).

The Vesicular segment spans residues 1-59 (MSGVWGAGGPRCQAALAVLASLCRARPPPLGLDVETCQSFELQPPEQSPSAADSGTSVS). The tract at residues 12–38 (CQAALAVLASLCRARPPPLGLDVETCQ) is cysteine motif. A helical membrane pass occupies residues 60–80 (LLAVVVIVCGVALVAVFFFLF). The Cytoplasmic portion of the chain corresponds to 81–511 (WKLCWMPWRN…KSFKEGTPRL (431 aa)). Low complexity predominate over residues 93–103 (ASSPSSANPAS). Disordered regions lie at residues 93-118 (ASSP…MADK) and 157-182 (TKLQ…LPRQ). Over residues 160–172 (QRQTTEPASSTRH) the composition is skewed to polar residues. A Phosphoserine modification is found at Ser-217. C2 domains lie at 230–351 (SCGK…SIWK) and 362–495 (DLGE…AHWH). 11 residues coordinate Ca(2+): Asp-261, Asp-267, Asp-319, Phe-320, Asp-321, Ser-324, Asp-327, Asp-393, Asp-399, Asp-453, and Asp-455. The necessary for cell membrane association (isoform 2) stretch occupies residues 483-511 (MLAYPRKPIAHWHCLAEVKKSFKEGTPRL).

It belongs to the synaptotagmin family. As to quaternary structure, isoform 1: Homodimer; disulfide-linked via the cysteine motif. Isoform 1: Can also form heterodimers with SYT3, SYT7, SYT9 and SYT10. Isoform 1: Interacts with STX1A, STX1B and STX2; the interaction is Ca(2+)-dependent. Isoform 2: Is not able to form homodimer and heterodimers. Ca(2+) serves as cofactor.

It is found in the cytoplasmic vesicle. The protein resides in the secretory vesicle. It localises to the synaptic vesicle membrane. Its subcellular location is the membrane. The protein localises to the cytoplasm. It is found in the cytosol. The protein resides in the cell membrane. Functionally, may be involved in Ca(2+)-dependent exocytosis of secretory vesicles through Ca(2+) and phospholipid binding to the C2 domain or may serve as Ca(2+) sensors in the process of vesicular trafficking and exocytosis. May mediate Ca(2+)-regulation of exocytosis in acrosomal reaction in sperm. The sequence is that of Synaptotagmin-6 (Syt6) from Rattus norvegicus (Rat).